The chain runs to 344 residues: MSTSRSDALKAEADRSDNDVEKLLRPQSLDEFVGQEKIKENLNVFMKAALQRGETLDHVLLSGPPGLGKTTLAHIIANEMGARIRTSSGPVLEKPADIAGVLTNLEEGDLLFIDEIHRLSSVVEEYLYSAMEDYRIDIVIDQGPNARTVQIDLPPFTMVGATTRKGLLTAPLRARFGIDFRYDYYTADLLQEITQRSARILDVETTPDGAYEIARRSRGTPRVANRLLRRTRDFAEVEGDGEITKAIADRALNALDVDEEGLDDMDARILLTLIDNFDGGPTGLKNLAVSVGEESGTLEEVYEPYLIQEGFMERTPQGRVALQRAYDHFDRSSPAADQDLFDQE.

Residues 1–185 are large ATPase domain (RuvB-L); that stretch reads MSTSRSDALK…FGIDFRYDYY (185 aa). ATP contacts are provided by residues Leu24, Arg25, Gly66, Lys69, Thr70, Thr71, 132–134, Arg175, Tyr185, and Arg222; that span reads EDY. Thr70 is a Mg(2+) binding site. Positions 186 to 256 are small ATPAse domain (RuvB-S); sequence TADLLQEITQ…IADRALNALD (71 aa). The segment at 259 to 344 is head domain (RuvB-H); that stretch reads EEGLDDMDAR…AADQDLFDQE (86 aa). Positions 314 and 319 each coordinate DNA.

The protein belongs to the RuvB family. In terms of assembly, homohexamer. Forms an RuvA(8)-RuvB(12)-Holliday junction (HJ) complex. HJ DNA is sandwiched between 2 RuvA tetramers; dsDNA enters through RuvA and exits via RuvB. An RuvB hexamer assembles on each DNA strand where it exits the tetramer. Each RuvB hexamer is contacted by two RuvA subunits (via domain III) on 2 adjacent RuvB subunits; this complex drives branch migration. In the full resolvosome a probable DNA-RuvA(4)-RuvB(12)-RuvC(2) complex forms which resolves the HJ.

The protein resides in the cytoplasm. It catalyses the reaction ATP + H2O = ADP + phosphate + H(+). The RuvA-RuvB-RuvC complex processes Holliday junction (HJ) DNA during genetic recombination and DNA repair, while the RuvA-RuvB complex plays an important role in the rescue of blocked DNA replication forks via replication fork reversal (RFR). RuvA specifically binds to HJ cruciform DNA, conferring on it an open structure. The RuvB hexamer acts as an ATP-dependent pump, pulling dsDNA into and through the RuvAB complex. RuvB forms 2 homohexamers on either side of HJ DNA bound by 1 or 2 RuvA tetramers; 4 subunits per hexamer contact DNA at a time. Coordinated motions by a converter formed by DNA-disengaged RuvB subunits stimulates ATP hydrolysis and nucleotide exchange. Immobilization of the converter enables RuvB to convert the ATP-contained energy into a lever motion, pulling 2 nucleotides of DNA out of the RuvA tetramer per ATP hydrolyzed, thus driving DNA branch migration. The RuvB motors rotate together with the DNA substrate, which together with the progressing nucleotide cycle form the mechanistic basis for DNA recombination by continuous HJ branch migration. Branch migration allows RuvC to scan DNA until it finds its consensus sequence, where it cleaves and resolves cruciform DNA. The protein is Holliday junction branch migration complex subunit RuvB of Salinibacter ruber (strain DSM 13855 / M31).